Reading from the N-terminus, the 264-residue chain is Triosephosphate isomerase (264 aa).

Substrate is bound at residue 13–15 (NWK). Catalysis depends on His98, which acts as the Electrophile. The active-site Proton acceptor is Glu170. Substrate contacts are provided by residues Gly176, Ser216, and 237–238 (GG).

It belongs to the triosephosphate isomerase family. In terms of assembly, homodimer.

Its subcellular location is the cytoplasm. It catalyses the reaction D-glyceraldehyde 3-phosphate = dihydroxyacetone phosphate. The protein operates within carbohydrate biosynthesis; gluconeogenesis. It participates in carbohydrate degradation; glycolysis; D-glyceraldehyde 3-phosphate from glycerone phosphate: step 1/1. Functionally, involved in the gluconeogenesis. Catalyzes stereospecifically the conversion of dihydroxyacetone phosphate (DHAP) to D-glyceraldehyde-3-phosphate (G3P). This is Triosephosphate isomerase from Protochlamydia amoebophila (strain UWE25).